A 25-amino-acid polypeptide reads, in one-letter code: Cruzioseptin-13 (25 aa).

Asn-25 is subject to Asparagine amide.

Expressed by the skin glands.

It is found in the secreted. Its function is as follows. Has antimicrobial activity. In Cruziohyla calcarifer (Splendid leaf frog), this protein is Cruzioseptin-13.